The primary structure comprises 530 residues: Structure-specific endonuclease subunit SLX1 homolog 2 (530 aa).

The region spanning 4 to 89 is the GIY-YIG domain; the sequence is RFHCVYLLTS…PTKSTRLKTQ (86 aa). Residues 232–365 form an SLX1-type zinc finger; it reads CALCSLPLRS…PSQPCPCPLC (134 aa). 3 disordered regions span residues 276-306, 410-438, and 474-502; these read ATMG…MDAH, NSSL…YCGD, and LPPS…RMTD. Basic and acidic residues predominate over residues 283–298; the sequence is RNERSGEYSNKIKDDS.

This sequence belongs to the SLX1 family. Forms a heterodimer with a member of the SLX4 family. A divalent metal cation serves as cofactor.

Its subcellular location is the nucleus. Its function is as follows. Catalytic subunit of a heterodimeric structure-specific endonuclease that resolves DNA secondary structures generated during DNA repair and recombination. Has endonuclease activity towards branched DNA substrates, introducing single-strand cuts in duplex DNA close to junctions with ss-DNA. The polypeptide is Structure-specific endonuclease subunit SLX1 homolog 2 (Trypanosoma cruzi (strain CL Brener)).